Consider the following 244-residue polypeptide: 3-oxoacyl-[acyl-carrier-protein] reductase FabG (244 aa).

NADP(+) contacts are provided by residues 12 to 15, T37, 59 to 60, and N86; these read GASR and NV. S138 contacts substrate. Residue Y151 is the Proton acceptor of the active site. Residues 151 to 155 and I184 each bind NADP(+); that span reads YAAAK.

It belongs to the short-chain dehydrogenases/reductases (SDR) family. Homotetramer.

It carries out the reaction a (3R)-hydroxyacyl-[ACP] + NADP(+) = a 3-oxoacyl-[ACP] + NADPH + H(+). Its pathway is lipid metabolism; fatty acid biosynthesis. Catalyzes the NADPH-dependent reduction of beta-ketoacyl-ACP substrates to beta-hydroxyacyl-ACP products, the first reductive step in the elongation cycle of fatty acid biosynthesis. The sequence is that of 3-oxoacyl-[acyl-carrier-protein] reductase FabG (fabG) from Vibrio cholerae serotype O1 (strain ATCC 39315 / El Tor Inaba N16961).